Reading from the N-terminus, the 485-residue chain is Zinc finger protein 639 (485 aa).

Positions Met1–His14 are enriched in basic residues. Disordered stretches follow at residues Met1–Gly23 and Asp54–Arg80. At Ser60 the chain carries Phosphoserine. Residue Lys76 forms a Glycyl lysine isopeptide (Lys-Gly) (interchain with G-Cter in SUMO2) linkage. Ser88 bears the Phosphoserine mark. The segment at Ala115–Glu136 is disordered. Residues Lys177, Lys181, and Lys226 each participate in a glycyl lysine isopeptide (Lys-Gly) (interchain with G-Cter in SUMO2) cross-link. C2H2-type zinc fingers lie at residues Tyr204 to His227, Asn233 to His255, Tyr260 to His283, Tyr289 to His311, Phe374 to His397, His403 to His425, Tyr431 to His454, and His460 to His482. Residues Lys371–Ser455 are interaction with CTNNA2.

The protein belongs to the krueppel C2H2-type zinc-finger protein family. Interacts with CTNNA2.

The protein resides in the nucleus. Functionally, binds DNA and may function as a transcriptional repressor. In Mus musculus (Mouse), this protein is Zinc finger protein 639 (Znf639).